A 334-amino-acid polypeptide reads, in one-letter code: Probable aminoacyl tRNA synthase complex-interacting multifunctional protein 2 (334 aa).

In terms of domain architecture, GST C-terminal spans 280–327; sequence LDKRLQKQQYFGGSQMSVADVGVYSSLIRMPAVTEKDLTPALVAWRKR.

As to quaternary structure, component of the aminoacyl-tRNA synthase complex which is comprised of a bifunctional glutamyl-prolyl-tRNA synthase, the monospecific isoleucyl, leucyl, glutaminyl, methionyl, lysyl, arginyl and aspartyl-tRNA synthases, and three auxiliary proteins.

The protein localises to the cytoplasm. It localises to the cytosol. The protein resides in the nucleus. Functionally, required for assembly and stability of the aminoacyl-tRNA synthase complex. This chain is Probable aminoacyl tRNA synthase complex-interacting multifunctional protein 2, found in Drosophila melanogaster (Fruit fly).